The sequence spans 339 residues: Transcription initiation factor IIB (339 aa).

The segment at 39–70 adopts a TFIIB-type zinc-finger fold; the sequence is EELICPMCGSKNIIKDYERAEIVCETCGCVLQ. Residues Cys43, Cys46, Cys62, and Cys65 each contribute to the Zn(2+) site. Tandem repeats lie at residues 156–239 and 250–331.

The protein belongs to the TFIIB family.

Its function is as follows. Stabilizes TBP binding to an archaeal box-A promoter. Also responsible for recruiting RNA polymerase II to the pre-initiation complex (DNA-TBP-TFIIB). This is Transcription initiation factor IIB from Methanothermococcus thermolithotrophicus (Methanococcus thermolithotrophicus).